A 129-amino-acid chain; its full sequence is Mite allergen Blo t 21 (129 aa).

The N-terminal stretch at 1-16 (MKFIIALAALIAVACA) is a signal peptide.

It belongs to the mite group 5 allergen family. As to quaternary structure, may exist as homodimer and homotrimer. In terms of tissue distribution, midgut and hindgut contents as well as fecal pellets (at protein level).

This Blomia tropicalis (Mite) protein is Mite allergen Blo t 21.